The sequence spans 466 residues: Asparagine--tRNA ligase (466 aa).

Belongs to the class-II aminoacyl-tRNA synthetase family. As to quaternary structure, homodimer.

The protein resides in the cytoplasm. The catalysed reaction is tRNA(Asn) + L-asparagine + ATP = L-asparaginyl-tRNA(Asn) + AMP + diphosphate + H(+). The sequence is that of Asparagine--tRNA ligase from Colwellia psychrerythraea (strain 34H / ATCC BAA-681) (Vibrio psychroerythus).